Reading from the N-terminus, the 245-residue chain is uncharacterized protein (245 aa).

This is an uncharacterized protein from Frog virus 3 (isolate Goorha) (FV-3).